Reading from the N-terminus, the 357-residue chain is Dual-specificity RNA methyltransferase RlmN (357 aa).

Residue Glu89 is the Proton acceptor of the active site. Residues 109 to 340 form the Radical SAM core domain; it reads EGEKYTVCVS…CTIRESKALD (232 aa). An intrachain disulfide couples Cys116 to Cys345. [4Fe-4S] cluster contacts are provided by Cys123, Cys127, and Cys130. Residues 173–174, Ser203, 226–228, and Asn302 contribute to the S-adenosyl-L-methionine site; these read GE and SLH. Cys345 acts as the S-methylcysteine intermediate in catalysis.

It belongs to the radical SAM superfamily. RlmN family. It depends on [4Fe-4S] cluster as a cofactor.

The protein localises to the cytoplasm. It catalyses the reaction adenosine(2503) in 23S rRNA + 2 reduced [2Fe-2S]-[ferredoxin] + 2 S-adenosyl-L-methionine = 2-methyladenosine(2503) in 23S rRNA + 5'-deoxyadenosine + L-methionine + 2 oxidized [2Fe-2S]-[ferredoxin] + S-adenosyl-L-homocysteine. The enzyme catalyses adenosine(37) in tRNA + 2 reduced [2Fe-2S]-[ferredoxin] + 2 S-adenosyl-L-methionine = 2-methyladenosine(37) in tRNA + 5'-deoxyadenosine + L-methionine + 2 oxidized [2Fe-2S]-[ferredoxin] + S-adenosyl-L-homocysteine. In terms of biological role, specifically methylates position 2 of adenine 2503 in 23S rRNA and position 2 of adenine 37 in tRNAs. m2A2503 modification seems to play a crucial role in the proofreading step occurring at the peptidyl transferase center and thus would serve to optimize ribosomal fidelity. This chain is Dual-specificity RNA methyltransferase RlmN, found in Helicobacter pylori (strain J99 / ATCC 700824) (Campylobacter pylori J99).